Consider the following 236-residue polypeptide: Urease accessory protein UreF (236 aa).

It belongs to the UreF family. In terms of assembly, ureD, UreF and UreG form a complex that acts as a GTP-hydrolysis-dependent molecular chaperone, activating the urease apoprotein by helping to assemble the nickel containing metallocenter of UreC. The UreE protein probably delivers the nickel.

Its subcellular location is the cytoplasm. Its function is as follows. Required for maturation of urease via the functional incorporation of the urease nickel metallocenter. The polypeptide is Urease accessory protein UreF (Synechocystis sp. (strain ATCC 27184 / PCC 6803 / Kazusa)).